The sequence spans 641 residues: Phosphomethylpyrimidine synthase (641 aa).

Residues Asn221, Met250, Tyr279, His315, 335-337 (SRG), 376-379 (DGLR), and Glu415 contribute to the substrate site. His419 contacts Zn(2+). Position 442 (Tyr442) interacts with substrate. Residue His483 coordinates Zn(2+). 3 residues coordinate [4Fe-4S] cluster: Cys563, Cys566, and Cys571.

Belongs to the ThiC family. As to quaternary structure, homodimer. It depends on [4Fe-4S] cluster as a cofactor.

It carries out the reaction 5-amino-1-(5-phospho-beta-D-ribosyl)imidazole + S-adenosyl-L-methionine = 4-amino-2-methyl-5-(phosphooxymethyl)pyrimidine + CO + 5'-deoxyadenosine + formate + L-methionine + 3 H(+). It participates in cofactor biosynthesis; thiamine diphosphate biosynthesis. Catalyzes the synthesis of the hydroxymethylpyrimidine phosphate (HMP-P) moiety of thiamine from aminoimidazole ribotide (AIR) in a radical S-adenosyl-L-methionine (SAM)-dependent reaction. The polypeptide is Phosphomethylpyrimidine synthase (Rhodopseudomonas palustris (strain BisA53)).